A 247-amino-acid polypeptide reads, in one-letter code: Adenosylcobinamide-GDP ribazoletransferase (247 aa).

Helical transmembrane passes span 34 to 54 (IITF…VFMV), 59 to 79 (CGVP…TGGF), 113 to 133 (GGLA…ELAL), 138 to 158 (ILAS…LLMY), and 194 to 214 (VLLP…AIFI).

The protein belongs to the CobS family. Requires Mg(2+) as cofactor.

The protein resides in the cell inner membrane. The enzyme catalyses alpha-ribazole + adenosylcob(III)inamide-GDP = adenosylcob(III)alamin + GMP + H(+). The catalysed reaction is alpha-ribazole 5'-phosphate + adenosylcob(III)inamide-GDP = adenosylcob(III)alamin 5'-phosphate + GMP + H(+). Its pathway is cofactor biosynthesis; adenosylcobalamin biosynthesis; adenosylcobalamin from cob(II)yrinate a,c-diamide: step 7/7. Functionally, joins adenosylcobinamide-GDP and alpha-ribazole to generate adenosylcobalamin (Ado-cobalamin). Also synthesizes adenosylcobalamin 5'-phosphate from adenosylcobinamide-GDP and alpha-ribazole 5'-phosphate. The sequence is that of Adenosylcobinamide-GDP ribazoletransferase from Shigella dysenteriae serotype 1 (strain Sd197).